The primary structure comprises 280 residues: Acetyl-coenzyme A carboxylase carboxyl transferase subunit beta (280 aa).

Residues 28 to 280 (IMTKCPSCRT…TLTKLLAMHQ (253 aa)) enclose the CoA carboxyltransferase N-terminal domain. Residues Cys-32, Cys-35, Cys-51, and Cys-54 each contribute to the Zn(2+) site. A C4-type zinc finger spans residues 32–54 (CPSCRTIMYTKDLKKNLSVCRTC).

Belongs to the AccD/PCCB family. Acetyl-CoA carboxylase is a heterohexamer composed of biotin carboxyl carrier protein (AccB), biotin carboxylase (AccC) and two subunits each of ACCase subunit alpha (AccA) and ACCase subunit beta (AccD). It depends on Zn(2+) as a cofactor.

It is found in the cytoplasm. The catalysed reaction is N(6)-carboxybiotinyl-L-lysyl-[protein] + acetyl-CoA = N(6)-biotinyl-L-lysyl-[protein] + malonyl-CoA. It participates in lipid metabolism; malonyl-CoA biosynthesis; malonyl-CoA from acetyl-CoA: step 1/1. In terms of biological role, component of the acetyl coenzyme A carboxylase (ACC) complex. Biotin carboxylase (BC) catalyzes the carboxylation of biotin on its carrier protein (BCCP) and then the CO(2) group is transferred by the transcarboxylase to acetyl-CoA to form malonyl-CoA. The polypeptide is Acetyl-coenzyme A carboxylase carboxyl transferase subunit beta (Shouchella clausii (strain KSM-K16) (Alkalihalobacillus clausii)).